Reading from the N-terminus, the 430-residue chain is Putative aspergillopepsin A-like aspartic endopeptidase MCYG_07979 (430 aa).

Positions 1 to 17 (MHLSSLLVAVLLPLALS) are cleaved as a signal peptide. A propeptide spans 18–87 (KPTPRKKPGS…SKIAGGAPGA (70 aa)) (activation peptide). The segment at 59-105 (STQGMDGYRPEPISRFQGNSKIAGGAPGAKDDGKDEKGEVENNPTSH) is disordered. Over residues 87-98 (AKDDGKDEKGEV) the composition is skewed to basic and acidic residues. Residues 109-427 (FLSPVTIGGQ…DYRGPSVSLA (319 aa)) enclose the Peptidase A1 domain. Asp125 is a catalytic residue. N-linked (GlcNAc...) asparagine glycosylation is present at Asn306. Asp314 is a catalytic residue. Asn352 carries an N-linked (GlcNAc...) asparagine glycan.

Belongs to the peptidase A1 family.

The protein resides in the secreted. This chain is Putative aspergillopepsin A-like aspartic endopeptidase MCYG_07979, found in Arthroderma otae (strain ATCC MYA-4605 / CBS 113480) (Microsporum canis).